The sequence spans 146 residues: Hemoglobin subunit beta (146 aa).

In terms of domain architecture, Globin spans 2–146; the sequence is QWTAEEKQLI…VAHALARKYH (145 aa). Residues His63 and His92 each coordinate heme b.

Belongs to the globin family. In terms of assembly, heterotetramer of two alpha chains and two beta chains. As to expression, red blood cells.

In terms of biological role, involved in oxygen transport from the lung to the various peripheral tissues. This is Hemoglobin subunit beta (HBB) from Rhea americana (Greater rhea).